The sequence spans 53 residues: Large ribosomal subunit protein bL32c (53 aa).

Belongs to the bacterial ribosomal protein bL32 family.

The protein localises to the plastid. It localises to the chloroplast. This Guillardia theta (Cryptophyte) protein is Large ribosomal subunit protein bL32c (rpl32).